A 450-amino-acid chain; its full sequence is Divalent metal cation transporter MntH (450 aa).

The next 11 membrane-spanning stretches (helical) occupy residues 34-54, 61-81, 108-128, 141-161, 170-190, 212-232, 263-283, 305-325, 361-381, 383-403, and 422-442; these read LSFL…GNWI, AQYG…AMLL, IAII…IAEV, IPLI…LFIM, AIVG…VYIS, GILY…NLYL, IQLS…ASLF, PVLG…ALLA, SLAV…AAKI, QLLV…LIPL, and VNII…YLIV.

Belongs to the NRAMP family.

The protein localises to the cell membrane. In terms of biological role, h(+)-stimulated, divalent metal cation uptake system. This Staphylococcus aureus (strain Mu3 / ATCC 700698) protein is Divalent metal cation transporter MntH.